The sequence spans 883 residues: Alanine--tRNA ligase (883 aa).

Zn(2+) is bound by residues His-563, His-567, Cys-677, and His-681.

It belongs to the class-II aminoacyl-tRNA synthetase family. Zn(2+) is required as a cofactor.

The protein resides in the cytoplasm. It catalyses the reaction tRNA(Ala) + L-alanine + ATP = L-alanyl-tRNA(Ala) + AMP + diphosphate. In terms of biological role, catalyzes the attachment of alanine to tRNA(Ala) in a two-step reaction: alanine is first activated by ATP to form Ala-AMP and then transferred to the acceptor end of tRNA(Ala). Also edits incorrectly charged Ser-tRNA(Ala) and Gly-tRNA(Ala) via its editing domain. This is Alanine--tRNA ligase from Cereibacter sphaeroides (strain ATCC 17025 / ATH 2.4.3) (Rhodobacter sphaeroides).